The primary structure comprises 154 residues: Superoxide dismutase [Cu-Zn] (154 aa).

Cu cation is bound by residues histidine 47, histidine 49, and histidine 64. Cysteine 58 and cysteine 147 are oxidised to a cystine. Positions 64, 72, 81, and 84 each coordinate Zn(2+). Histidine 121 lines the Cu cation pocket. Arginine 144 contacts substrate.

It belongs to the Cu-Zn superoxide dismutase family. In terms of assembly, homodimer. Requires Cu cation as cofactor. It depends on Zn(2+) as a cofactor.

The protein resides in the cytoplasm. It catalyses the reaction 2 superoxide + 2 H(+) = H2O2 + O2. In terms of biological role, destroys radicals which are normally produced within the cells and which are toxic to biological systems. The sequence is that of Superoxide dismutase [Cu-Zn] (sod1) from Schizosaccharomyces pombe (strain 972 / ATCC 24843) (Fission yeast).